Reading from the N-terminus, the 717-residue chain is HHIP-like protein 2 (717 aa).

Positions 1–40 (MLGKHTSPHTVPGHRAPWLSPGIFCLGLPFLLGWVGLLQG) are cleaved as a signal peptide. 4 disulfide bridges follow: C203-C545, C207-C551, C423-C441, and C508-C607. The disordered stretch occupies residues 642–717 (ARKASNATFT…MRQAAGRSHP (76 aa)). Polar residues predominate over residues 646-662 (SNATFTSSSDRVASQKG). An N-linked (GlcNAc...) asparagine glycan is attached at N647. Residues 672–687 (SSKKTFRRPGTKKKSR) are compositionally biased toward basic residues.

It belongs to the HHIP family.

The protein localises to the secreted. This Mus musculus (Mouse) protein is HHIP-like protein 2 (Hhipl2).